The chain runs to 208 residues: Small ribosomal subunit protein uS2 (208 aa).

The interval 189–208 (KPDQDLPVPPEEFETKLVQS) is disordered.

It belongs to the universal ribosomal protein uS2 family.

The chain is Small ribosomal subunit protein uS2 (rps2) from Pyrobaculum aerophilum (strain ATCC 51768 / DSM 7523 / JCM 9630 / CIP 104966 / NBRC 100827 / IM2).